A 120-amino-acid polypeptide reads, in one-letter code: Large ribosomal subunit protein uL18 (120 aa).

Residues 1–10 are compositionally biased toward basic and acidic residues; it reads MKLNRVESTR. The disordered stretch occupies residues 1–26; sequence MKLNRVESTRSRHRRVRRKVGGTGDR. Residues 11 to 20 are compositionally biased toward basic residues; sequence SRHRRVRRKV.

It belongs to the universal ribosomal protein uL18 family. Part of the 50S ribosomal subunit; part of the 5S rRNA/L5/L18/L25 subcomplex. Contacts the 5S and 23S rRNAs.

Functionally, this is one of the proteins that bind and probably mediate the attachment of the 5S RNA into the large ribosomal subunit, where it forms part of the central protuberance. The chain is Large ribosomal subunit protein uL18 from Cyanothece sp. (strain PCC 7425 / ATCC 29141).